A 576-amino-acid polypeptide reads, in one-letter code: Arginine--tRNA ligase (576 aa).

A 'HIGH' region motif is present at residues 126-136 (ANPTGPMHIGH).

The protein belongs to the class-I aminoacyl-tRNA synthetase family. As to quaternary structure, monomer.

It localises to the cytoplasm. It catalyses the reaction tRNA(Arg) + L-arginine + ATP = L-arginyl-tRNA(Arg) + AMP + diphosphate. The protein is Arginine--tRNA ligase of Rickettsia akari (strain Hartford).